The primary structure comprises 270 residues: Ethanolamine ammonia-lyase small subunit (270 aa).

Adenosylcob(III)alamin-binding residues include Val-166, Glu-187, and Cys-216.

Belongs to the EutC family. In terms of assembly, the basic unit is a heterodimer which dimerizes to form tetramers. The heterotetramers trimerize; 6 large subunits form a core ring with 6 small subunits projecting outwards. It depends on adenosylcob(III)alamin as a cofactor.

Its subcellular location is the bacterial microcompartment. It catalyses the reaction ethanolamine = acetaldehyde + NH4(+). It functions in the pathway amine and polyamine degradation; ethanolamine degradation. Catalyzes the deamination of various vicinal amino-alcohols to oxo compounds. Allows this organism to utilize ethanolamine as the sole source of nitrogen and carbon in the presence of external vitamin B12. The protein is Ethanolamine ammonia-lyase small subunit of Ralstonia nicotianae (strain ATCC BAA-1114 / GMI1000) (Ralstonia solanacearum).